Reading from the N-terminus, the 489-residue chain is Homoserine O-acetyltransferase (489 aa).

One can recognise an AB hydrolase-1 domain in the interval 47-354; the sequence is NAILVCHALT…NYGHDSFLLE (308 aa). The Nucleophile role is filled by serine 152. Position 221 (arginine 221) interacts with substrate. Catalysis depends on residues aspartate 315 and histidine 348. Aspartate 349 serves as a coordination point for substrate. 2 CBS domains span residues 375 to 434 and 436 to 489; these read MIED…NLEE and MTKN…IEEF.

The protein belongs to the AB hydrolase superfamily. MetX family. Homodimer.

It localises to the cytoplasm. It carries out the reaction L-homoserine + acetyl-CoA = O-acetyl-L-homoserine + CoA. The protein operates within amino-acid biosynthesis; L-methionine biosynthesis via de novo pathway; O-acetyl-L-homoserine from L-homoserine: step 1/1. Its function is as follows. Transfers an acetyl group from acetyl-CoA to L-homoserine, forming acetyl-L-homoserine. In Methanohalobium evestigatum (strain ATCC BAA-1072 / DSM 3721 / NBRC 107634 / OCM 161 / Z-7303), this protein is Homoserine O-acetyltransferase.